Reading from the N-terminus, the 411-residue chain is Probable phosphatase HAD1 (411 aa).

Polar residues predominate over residues 14 to 23; it reads LPSPNTSQPP. Residues 14–33 are disordered; the sequence is LPSPNTSQPPSAAPSRRGSF. D61 functions as the Nucleophile in the catalytic mechanism. Positions 61, 63, and 338 each coordinate Mg(2+). D63 (proton donor) is an active-site residue. The segment at 296–386 is disordered; it reads PRPTPDVTPV…QSGQAGVTLD (91 aa). The segment covering 326–345 has biased composition (polar residues); sequence VRNTQTIMKGSDDLTGNDSV. The span at 362–373 shows a compositional bias: basic and acidic residues; that stretch reads SVEKRAEMEFHR.

This sequence belongs to the HAD-like hydrolase superfamily. Post-translationally, phosphorylated.

In terms of biological role, probable phosphatase. Required for cell wall integrity and virulence. This Cryptococcus neoformans var. grubii serotype A (strain H99 / ATCC 208821 / CBS 10515 / FGSC 9487) (Filobasidiella neoformans var. grubii) protein is Probable phosphatase HAD1.